The sequence spans 549 residues: Oxygen-dependent choline dehydrogenase (549 aa).

Position 4 to 33 (4 to 33 (DFVIIGSGSAGSAMASRLSEDGKHTVIVLE)) interacts with FAD. His465 serves as the catalytic Proton acceptor.

This sequence belongs to the GMC oxidoreductase family. It depends on FAD as a cofactor.

The enzyme catalyses choline + A = betaine aldehyde + AH2. The catalysed reaction is betaine aldehyde + NAD(+) + H2O = glycine betaine + NADH + 2 H(+). The protein operates within amine and polyamine biosynthesis; betaine biosynthesis via choline pathway; betaine aldehyde from choline (cytochrome c reductase route): step 1/1. Functionally, involved in the biosynthesis of the osmoprotectant glycine betaine. Catalyzes the oxidation of choline to betaine aldehyde and betaine aldehyde to glycine betaine at the same rate. The sequence is that of Oxygen-dependent choline dehydrogenase from Rhizobium rhizogenes (strain K84 / ATCC BAA-868) (Agrobacterium radiobacter).